The sequence spans 158 residues: SsrA-binding protein (158 aa).

The disordered stretch occupies residues 131 to 158; that stretch reads GKKTHDKRETEKKRDWNREKARLLRDRG. Residues 136–158 show a composition bias toward basic and acidic residues; that stretch reads DKRETEKKRDWNREKARLLRDRG.

This sequence belongs to the SmpB family.

Its subcellular location is the cytoplasm. Its function is as follows. Required for rescue of stalled ribosomes mediated by trans-translation. Binds to transfer-messenger RNA (tmRNA), required for stable association of tmRNA with ribosomes. tmRNA and SmpB together mimic tRNA shape, replacing the anticodon stem-loop with SmpB. tmRNA is encoded by the ssrA gene; the 2 termini fold to resemble tRNA(Ala) and it encodes a 'tag peptide', a short internal open reading frame. During trans-translation Ala-aminoacylated tmRNA acts like a tRNA, entering the A-site of stalled ribosomes, displacing the stalled mRNA. The ribosome then switches to translate the ORF on the tmRNA; the nascent peptide is terminated with the 'tag peptide' encoded by the tmRNA and targeted for degradation. The ribosome is freed to recommence translation, which seems to be the essential function of trans-translation. The chain is SsrA-binding protein from Brucella abortus biovar 1 (strain 9-941).